The chain runs to 167 residues: uncharacterized protein (167 aa).

Over residues 1 to 13 (MQGDIRRKKDLLP) the composition is skewed to basic and acidic residues. Disordered regions lie at residues 1–26 (MQGDIRRKKDLLPRYKTGSKYNSRRR) and 67–167 (ESHS…ILDN). Residues 71–80 (SDVSASASDH) show a composition bias toward low complexity. Residues 102–156 (VPKEKFNNEVAKQQEVKNLENDLKPQIDSEKQKQINKDKKEQKQQLQKEKQDLAK) are compositionally biased toward basic and acidic residues.

This is an uncharacterized protein from Saccharomyces cerevisiae (strain ATCC 204508 / S288c) (Baker's yeast).